A 258-amino-acid polypeptide reads, in one-letter code: Indole-3-glycerol phosphate synthase (258 aa).

It belongs to the TrpC family.

It catalyses the reaction 1-(2-carboxyphenylamino)-1-deoxy-D-ribulose 5-phosphate + H(+) = (1S,2R)-1-C-(indol-3-yl)glycerol 3-phosphate + CO2 + H2O. It participates in amino-acid biosynthesis; L-tryptophan biosynthesis; L-tryptophan from chorismate: step 4/5. This is Indole-3-glycerol phosphate synthase from Exiguobacterium sibiricum (strain DSM 17290 / CCUG 55495 / CIP 109462 / JCM 13490 / 255-15).